We begin with the raw amino-acid sequence, 218 residues long: N-(5'-phosphoribosyl)anthranilate isomerase (218 aa).

It belongs to the TrpF family.

It carries out the reaction N-(5-phospho-beta-D-ribosyl)anthranilate = 1-(2-carboxyphenylamino)-1-deoxy-D-ribulose 5-phosphate. Its pathway is amino-acid biosynthesis; L-tryptophan biosynthesis; L-tryptophan from chorismate: step 3/5. The chain is N-(5'-phosphoribosyl)anthranilate isomerase from Acetivibrio thermocellus (strain ATCC 27405 / DSM 1237 / JCM 9322 / NBRC 103400 / NCIMB 10682 / NRRL B-4536 / VPI 7372) (Clostridium thermocellum).